A 164-amino-acid polypeptide reads, in one-letter code: Transcription elongation factor GreA (164 aa).

It belongs to the GreA/GreB family.

In terms of biological role, necessary for efficient RNA polymerase transcription elongation past template-encoded arresting sites. The arresting sites in DNA have the property of trapping a certain fraction of elongating RNA polymerases that pass through, resulting in locked ternary complexes. Cleavage of the nascent transcript by cleavage factors such as GreA or GreB allows the resumption of elongation from the new 3'terminus. GreA releases sequences of 2 to 3 nucleotides. The protein is Transcription elongation factor GreA of Helicobacter acinonychis (strain Sheeba).